The chain runs to 745 residues: Myeloperoxidase (745 aa).

The first 48 residues, 1 to 48 (MGVPFFSSLRCMVDLGPCWAGGLTAEMKLLLALAGLLAILATPQPSEG), serve as a signal peptide directing secretion. N139 carries an N-linked (GlcNAc...) asparagine glycan. A disulfide bridge connects residues C167 and C180. D260 provides a ligand contact to heme b. Catalysis depends on H261, which acts as the Proton acceptor. D262 contacts Ca(2+). Intrachain disulfides connect C281/C291 and C285/C309. C316 is modified (cysteine sulfenic acid (-SOH)). The N-linked (GlcNAc...) asparagine glycan is linked to N323. Residues T334, F336, D338, and S340 each coordinate Ca(2+). 2 N-linked (GlcNAc...) asparagine glycosylation sites follow: N355 and N391. A disulfide bridge connects residues C387 and C398. E408 and M409 together coordinate heme b. N483 carries N-linked (GlcNAc...) asparagine glycosylation. H502 provides a ligand contact to heme b. Disulfide bonds link C606-C663 and C704-C730. N729 carries an N-linked (GlcNAc...) asparagine glycan.

It belongs to the peroxidase family. XPO subfamily. In terms of assembly, homodimer; disulfide-linked. Each monomer consists of a light and a heavy chain. Found in a complex with CP and LTF; interacts directly with CP, which protects CP antioxidant properties by MPO. Requires Ca(2+) as cofactor. Heme b is required as a cofactor.

The protein resides in the lysosome. The enzyme catalyses chloride + H2O2 + H(+) = hypochlorous acid + H2O. Functionally, part of the host defense system of polymorphonuclear leukocytes. It is responsible for microbicidal activity against a wide range of organisms. In the stimulated PMN, MPO catalyzes the production of hypohalous acids, primarily hypochlorous acid in physiologic situations, and other toxic intermediates that greatly enhance PMN microbicidal activity. Mediates the proteolytic cleavage of alpha-1-microglobulin to form t-alpha-1-microglobulin, which potently inhibits oxidation of low-density lipoprotein particles and limits vascular damage. This is Myeloperoxidase from Homo sapiens (Human).